The chain runs to 577 residues: Endopolyphosphatase (577 aa).

Residues Met-1 to Arg-2 are Cytoplasmic-facing. The chain crosses the membrane as a helical; Signal-anchor for type II membrane protein span at residues Pro-3–Gly-23. Over Asn-24–Asp-577 the chain is Vacuolar. Asn-363, Asn-370, Asn-375, and Asn-399 each carry an N-linked (GlcNAc...) asparagine glycan. The disordered stretch occupies residues Ser-430–Pro-460. Residues Lys-437–Ile-456 show a composition bias toward basic residues. The N-linked (GlcNAc...) asparagine glycan is linked to Asn-481.

It belongs to the endopolyphosphatase PPN1 family. A divalent metal cation is required as a cofactor. Post-translationally, processing by proteases in the vacuole may be required for activation.

It localises to the vacuole membrane. It catalyses the reaction [phosphate](n+1) + n H2O = (n+1) phosphate + n H(+). Functionally, catalyzes the hydrolysis of inorganic polyphosphate (polyP) chains of many hundreds of phosphate residues into shorter lengths. This Schizosaccharomyces pombe (strain 972 / ATCC 24843) (Fission yeast) protein is Endopolyphosphatase (ppn1).